The primary structure comprises 336 residues: Probable ADP-ribosylation factor GTPase-activating protein AGD13 (336 aa).

The region spanning 15 to 137 is the Arf-GAP domain; it reads KRRIRDLLNQ…EFLKPSLRIT (123 aa). Residues 30–53 form a C4-type zinc finger; the sequence is CADCGASDPKWASANIGVFICLKC. A C2 domain is found at 162–280; it reads RTNSSSQTMF…AMAFGDPEMF (119 aa). 3 residues coordinate Ca(2+): aspartate 249, serine 252, and aspartate 255.

It depends on Ca(2+) as a cofactor.

Its function is as follows. GTPase-activating protein (GAP) for ADP ribosylation factor (ARF). The sequence is that of Probable ADP-ribosylation factor GTPase-activating protein AGD13 (AGD13) from Arabidopsis thaliana (Mouse-ear cress).